Reading from the N-terminus, the 109-residue chain is Somatostatin-2 (109 aa).

The signal sequence occupies residues Met-1 to Ser-16. A propeptide spanning residues Val-17–Arg-80 is cleaved from the precursor. Cys-98 and Cys-109 form a disulfide bridge.

It belongs to the somatostatin family.

Its subcellular location is the secreted. In terms of biological role, somatostatin inhibits the release of somatotropin. This Protopterus annectens (African lungfish) protein is Somatostatin-2 (sst2).